Reading from the N-terminus, the 285-residue chain is Non-structural protein 3c (285 aa).

The chain is Non-structural protein 3c from Bat coronavirus 133/2005 (BtCoV).